A 398-amino-acid chain; its full sequence is Enoyl-[acyl-carrier-protein] reductase [NADH] (398 aa).

Residues 48–53 (GASTGY), 74–75 (FE), 111–112 (DA), and 139–140 (LA) each bind NAD(+). Position 225 (Tyr-225) interacts with substrate. Tyr-235 functions as the Proton donor in the catalytic mechanism. Residues Lys-244 and 273 to 275 (VVT) each bind NAD(+).

Belongs to the TER reductase family. As to quaternary structure, monomer.

The catalysed reaction is a 2,3-saturated acyl-[ACP] + NAD(+) = a (2E)-enoyl-[ACP] + NADH + H(+). Its pathway is lipid metabolism; fatty acid biosynthesis. In terms of biological role, involved in the final reduction of the elongation cycle of fatty acid synthesis (FAS II). Catalyzes the reduction of a carbon-carbon double bond in an enoyl moiety that is covalently linked to an acyl carrier protein (ACP). This Paraburkholderia phytofirmans (strain DSM 17436 / LMG 22146 / PsJN) (Burkholderia phytofirmans) protein is Enoyl-[acyl-carrier-protein] reductase [NADH].